The chain runs to 303 residues: Large ribosomal subunit protein uL1m (303 aa).

It belongs to the universal ribosomal protein uL1 family. In terms of assembly, component of the mitochondrial large ribosomal subunit (mt-LSU). Mature N.crassa 74S mitochondrial ribosomes consist of a small (37S) and a large (54S) subunit. The 37S small subunit contains a 16S ribosomal RNA (16S mt-rRNA) and 32 different proteins. The 54S large subunit contains a 23S rRNA (23S mt-rRNA) and 42 different proteins.

The protein localises to the mitochondrion. In terms of biological role, component of the mitochondrial ribosome (mitoribosome), a dedicated translation machinery responsible for the synthesis of mitochondrial genome-encoded proteins, including at least some of the essential transmembrane subunits of the mitochondrial respiratory chain. The mitoribosomes are attached to the mitochondrial inner membrane and translation products are cotranslationally integrated into the membrane. The sequence is that of Large ribosomal subunit protein uL1m (mrpl1) from Neurospora crassa (strain ATCC 24698 / 74-OR23-1A / CBS 708.71 / DSM 1257 / FGSC 987).